Here is a 62-residue protein sequence, read N- to C-terminus: Large ribosomal subunit protein eL24 (62 aa).

Zn(2+) contacts are provided by Cys-6, Cys-9, Cys-32, and Cys-36. Residues Cys-6 to Cys-36 form a C4-type zinc finger.

Belongs to the eukaryotic ribosomal protein eL24 family. In terms of assembly, part of the 50S ribosomal subunit. Forms a cluster with proteins L3 and L14. It depends on Zn(2+) as a cofactor.

In terms of biological role, binds to the 23S rRNA. The polypeptide is Large ribosomal subunit protein eL24 (Methanosarcina mazei (strain ATCC BAA-159 / DSM 3647 / Goe1 / Go1 / JCM 11833 / OCM 88) (Methanosarcina frisia)).